The sequence spans 208 residues: MLKIIIPSIMLIPLTWFSNNKKVWINVTSYSFVINMIALVTLWQVNDITTNFSTMFSTDSLSSPLTMLTIWLLPLMLLASQKHIKNQTDFNKKMYISLLITLQVLLIMTFSANELIMFYILFEATLIPTLIIITRWGNQAERLNAGLYFLFYTLIGSIPLLIALISIQNTLGTLNIMLLSLDSSPQTPTWSSHILWLACIMAFMIKMP.

The next 6 helical transmembrane spans lie at 23–43 (VWIN…VTLW), 60–80 (SLSS…LLAS), 93–113 (KMYI…FSAN), 114–134 (ELIM…IIIT), 147–167 (LYFL…LISI), and 188–208 (PTWS…IKMP).

This sequence belongs to the complex I subunit 4 family. In terms of assembly, core subunit of respiratory chain NADH dehydrogenase (Complex I) which is composed of 45 different subunits.

It localises to the mitochondrion inner membrane. It carries out the reaction a ubiquinone + NADH + 5 H(+)(in) = a ubiquinol + NAD(+) + 4 H(+)(out). Core subunit of the mitochondrial membrane respiratory chain NADH dehydrogenase (Complex I) which catalyzes electron transfer from NADH through the respiratory chain, using ubiquinone as an electron acceptor. Essential for the catalytic activity and assembly of complex I. The chain is NADH-ubiquinone oxidoreductase chain 4 (MT-ND4) from Phodopus sungorus (Striped hairy-footed hamster).